Reading from the N-terminus, the 322-residue chain is Cysteine protease yopT1 (322 aa).

A disordered region spans residues 42–69; the sequence is LSHSNRQKKLSATIKHNQSSRSMLDRKL. Residues C139, H258, and D274 contribute to the active site.

It belongs to the peptidase C58 family. In terms of assembly, interacts with human ARHA.

The protein resides in the secreted. Functionally, cysteine protease, which is translocated into infected cells and plays a central role in pathogenesis by cleaving the C-terminus end of the human small GTPase RhoA/ARHA, a regulator of cytoskeleton. Once cleaved, ARHA loses its lipid modification, and is released from the cell membrane, leading to the subsequent disruption of actin cytoskeleton of the host cell. The chain is Cysteine protease yopT1 (yopT1) from Yersinia enterocolitica serotype O:8 / biotype 1B (strain NCTC 13174 / 8081).